The following is a 215-amino-acid chain: Cytochrome b6 (215 aa).

The chain crosses the membrane as a helical span at residues 32–52 (IFYCLGGITLTCFLVQVATGF). Cys35 provides a ligand contact to heme c. Heme b-binding residues include His86 and His100. A run of 3 helical transmembrane segments spans residues 90 to 110 (ASMMVLMMILHVFRVYLTGGF), 116 to 136 (LTWVTGVILAVLTVSFGVTGY), and 186 to 206 (LHTFVLPLLTAVFMLMHFLMI). Residues His187 and His202 each coordinate heme b.

The protein belongs to the cytochrome b family. PetB subfamily. In terms of assembly, the 4 large subunits of the cytochrome b6-f complex are cytochrome b6, subunit IV (17 kDa polypeptide, PetD), cytochrome f and the Rieske protein, while the 4 small subunits are PetG, PetL, PetM and PetN. The complex functions as a dimer. It depends on heme b as a cofactor. Requires heme c as cofactor.

The protein resides in the plastid. Its subcellular location is the chloroplast thylakoid membrane. In terms of biological role, component of the cytochrome b6-f complex, which mediates electron transfer between photosystem II (PSII) and photosystem I (PSI), cyclic electron flow around PSI, and state transitions. This is Cytochrome b6 from Klebsormidium bilatum (Filamentous green alga).